The primary structure comprises 130 residues: D-ribose pyranase (130 aa).

Residue histidine 20 is the Proton donor of the active site. Substrate is bound by residues aspartate 28, histidine 97, and 119 to 121 (YAN).

The protein belongs to the RbsD / FucU family. RbsD subfamily. As to quaternary structure, homodecamer.

It is found in the cytoplasm. It carries out the reaction beta-D-ribopyranose = beta-D-ribofuranose. It participates in carbohydrate metabolism; D-ribose degradation; D-ribose 5-phosphate from beta-D-ribopyranose: step 1/2. Its function is as follows. Catalyzes the interconversion of beta-pyran and beta-furan forms of D-ribose. This chain is D-ribose pyranase, found in Heliobacterium modesticaldum (strain ATCC 51547 / Ice1).